The primary structure comprises 335 residues: Trans-1,2-dihydrobenzene-1,2-diol dehydrogenase (335 aa).

Belongs to the Gfo/Idh/MocA family. As to quaternary structure, homodimer.

The catalysed reaction is (1R,2R)-1,2-dihydrobenzene-1,2-diol + NADP(+) = catechol + NADPH + H(+). The enzyme catalyses D-xylose + NADP(+) = D-xylono-1,5-lactone + NADPH + H(+). The chain is Trans-1,2-dihydrobenzene-1,2-diol dehydrogenase (DHDH) from Bos taurus (Bovine).